The chain runs to 669 residues: GTP-binding protein 1 (669 aa).

The disordered stretch occupies residues methionine 1–alanine 32. Phosphoserine occurs at positions 6, 8, 12, 24, 25, 44, 47, and 69. The 232-residue stretch at phenylalanine 158–tyrosine 389 folds into the tr-type G domain. The G1 stretch occupies residues glycine 167–serine 174. Glycine 167–serine 174 contributes to the GTP binding site. The G2 stretch occupies residues glycine 206–serine 210. The segment at aspartate 252–glycine 255 is G3. GTP is bound by residues aspartate 252–histidine 256 and threonine 308–aspartate 311. Residues threonine 308–aspartate 311 are G4. The interval serine 366–valine 368 is G5. A compositionally biased stretch (polar residues) spans leucine 573 to lysine 595. The interval leucine 573–cysteine 669 is disordered. The residue at position 580 (serine 580) is a Phosphoserine. Residues serine 633 to glycine 645 are compositionally biased toward low complexity. Over residues glycine 646–lysine 657 the composition is skewed to basic residues.

The protein belongs to the TRAFAC class translation factor GTPase superfamily. Classic translation factor GTPase family. GTPBP1 subfamily. In terms of assembly, interacts with EXOSC2/RRP4, EXOSC3/RRP40, EXOSC5/RRP46, HNRNPD, HNRNPR and SYNCRIP. Identified in a complex with AANAT mRNA, but does not bind mRNA by itself.

It localises to the cytoplasm. Its function is as follows. Promotes degradation of target mRNA species. Plays a role in the regulation of circadian mRNA stability. Binds GTP and has GTPase activity. The polypeptide is GTP-binding protein 1 (GTPBP1) (Bos taurus (Bovine)).